The sequence spans 260 residues: MEVVILPGSKQIGALAADAIEALLRRKPDAVLGLATGSSPLPVYDELARRHGQAGLDFSRVQAFALDEYVGLEPGHPQSYREVIRREFTDRVNIAPGNVHHPDGSAADIPAACQAYEDAIKAAGGVDLQLLGIGTDGHIGFNEPGSSLASRTRIKSLIEQTRRDNARFFTNIHDVPHHVLTQGLGTIMDARHVILIATGAQKAQAVRDFVEGPVAAICAASVLQMHPHVTVLVDEAAASSLRLADYYRHTYDSKPAWQGL.

The Proton acceptor; for enolization step role is filled by D67. D136 functions as the For ring-opening step in the catalytic mechanism. H138 functions as the Proton acceptor; for ring-opening step in the catalytic mechanism. Catalysis depends on E143, which acts as the For ring-opening step.

The protein belongs to the glucosamine/galactosamine-6-phosphate isomerase family. NagB subfamily.

The catalysed reaction is alpha-D-glucosamine 6-phosphate + H2O = beta-D-fructose 6-phosphate + NH4(+). The protein operates within amino-sugar metabolism; N-acetylneuraminate degradation; D-fructose 6-phosphate from N-acetylneuraminate: step 5/5. Its function is as follows. Catalyzes the reversible isomerization-deamination of glucosamine 6-phosphate (GlcN6P) to form fructose 6-phosphate (Fru6P) and ammonium ion. This Arthrobacter sp. (strain FB24) protein is Glucosamine-6-phosphate deaminase.